The sequence spans 454 residues: ABSCISIC ACID-INSENSITIVE 5-like protein 6 (454 aa).

Residues serine 32, serine 55, and serine 126 each carry the phosphoserine modification. Threonine 169 bears the Phosphothreonine mark. Residues 372-435 (IERRQKRMIK…KNQLLEPLRQ (64 aa)) form the bZIP domain. Residues 374–393 (RRQKRMIKNRESAARSRARK) are basic motif. The segment at 400-414 (LEAEIAQLKELNEEL) is leucine-zipper.

The protein belongs to the bZIP family. ABI5 subfamily. DNA-binding heterodimer. Interacts with ABI3 and the AFP proteins AFP1, AFP2, AFP3 and AFP4. As to expression, expressed in roots and flowers.

The protein localises to the nucleus. Its function is as follows. Binds to the ABA-responsive element (ABRE). Mediates stress-responsive ABA signaling. The chain is ABSCISIC ACID-INSENSITIVE 5-like protein 6 (ABF3) from Arabidopsis thaliana (Mouse-ear cress).